The sequence spans 712 residues: Transcriptional regulator GZF3 (712 aa).

The segment covering 1–13 (MSMSDIQQRPQIP) has biased composition (polar residues). Disordered stretches follow at residues 1–20 (MSMSDIQQRPQIPTTTTAAV), 27–135 (NVNT…GPVC), 173–280 (SLKT…HHHL), 377–533 (DVSS…GNNF), and 596–712 (LNNN…KVKI). Composition is skewed to low complexity over residues 27-84 (NVNT…EQSS) and 107-131 (PKTGTTSSSSSTTTSSATSSKISMS). Residues 135–159 (CGNCQTQTTPLWRRDETGQVLCNAC) form a GATA-type zinc finger. Residues 186-199 (KQNGSNSQSSKSSG) show a composition bias toward low complexity. The span at 213–223 (GKKSPKSKKKS) shows a compositional bias: basic residues. The span at 246 to 261 (ATSNNTPTFKSTTSQS) shows a compositional bias: polar residues. Over residues 268–280 (NHHHQHHNHHHHL) the composition is skewed to basic residues. Positions 379 to 414 (SSINGSSTSLSSSSASSSIFSSVAPSTSSSSSLSNG) are enriched in low complexity. Polar residues-rich tracts occupy residues 429–447 (SKISSPSSQPFTRSTTPLQ) and 484–498 (QQSMANYSQTNRSPI). 2 stretches are compositionally biased toward low complexity: residues 499–532 (NGNQDNNNNNNNNNNNNNNGNNNGNNNSNNNGNN) and 596–616 (LNNNGGMSSQTQPQPSQQPQQ). Residues 545-598 (TRISELELVNDLYRTRIMELEAMEQAARLRENSMKKRLDEVMNLQINYQNLLNN) are a coiled coil. Residues 631–667 (DQGSQSISPNVSITGSTTITSPNSRSKIISETTPTHH) are compositionally biased toward polar residues.

Its subcellular location is the nucleus. Its function is as follows. Probable transcription factor involved in response to fluconazole, LiCl, and copper. In Candida albicans (strain SC5314 / ATCC MYA-2876) (Yeast), this protein is Transcriptional regulator GZF3 (GZF3).